A 101-amino-acid chain; its full sequence is NAD(P)H-quinone oxidoreductase subunit 4L, chloroplastic (101 aa).

3 consecutive transmembrane segments (helical) span residues 2–22, 32–52, and 61–81; these read MLEH…YGLI, MCLE…SDFF, and IFSI…SAIV.

Belongs to the complex I subunit 4L family. NDH is composed of at least 16 different subunits, 5 of which are encoded in the nucleus.

Its subcellular location is the plastid. It localises to the chloroplast thylakoid membrane. It carries out the reaction a plastoquinone + NADH + (n+1) H(+)(in) = a plastoquinol + NAD(+) + n H(+)(out). The enzyme catalyses a plastoquinone + NADPH + (n+1) H(+)(in) = a plastoquinol + NADP(+) + n H(+)(out). Its function is as follows. NDH shuttles electrons from NAD(P)H:plastoquinone, via FMN and iron-sulfur (Fe-S) centers, to quinones in the photosynthetic chain and possibly in a chloroplast respiratory chain. The immediate electron acceptor for the enzyme in this species is believed to be plastoquinone. Couples the redox reaction to proton translocation, and thus conserves the redox energy in a proton gradient. This chain is NAD(P)H-quinone oxidoreductase subunit 4L, chloroplastic, found in Gossypium hirsutum (Upland cotton).